Consider the following 306-residue polypeptide: Large ribosomal subunit protein uL18 (306 aa).

This sequence belongs to the universal ribosomal protein uL18 family. In terms of assembly, component of the large ribosomal subunit (LSU).

Its subcellular location is the cytoplasm. It localises to the nucleus. In terms of biological role, component of the ribosome, a large ribonucleoprotein complex responsible for the synthesis of proteins in the cell. The small ribosomal subunit (SSU) binds messenger RNAs (mRNAs) and translates the encoded message by selecting cognate aminoacyl-transfer RNA (tRNA) molecules. The large subunit (LSU) contains the ribosomal catalytic site termed the peptidyl transferase center (PTC), which catalyzes the formation of peptide bonds, thereby polymerizing the amino acids delivered by tRNAs into a polypeptide chain. The nascent polypeptides leave the ribosome through a tunnel in the LSU and interact with protein factors that function in enzymatic processing, targeting, and the membrane insertion of nascent chains at the exit of the ribosomal tunnel. This is Large ribosomal subunit protein uL18 (RPL5) from Theileria annulata.